The sequence spans 235 residues: 2-C-methyl-D-erythritol 4-phosphate cytidylyltransferase (235 aa).

This sequence belongs to the IspD/TarI cytidylyltransferase family. IspD subfamily.

The catalysed reaction is 2-C-methyl-D-erythritol 4-phosphate + CTP + H(+) = 4-CDP-2-C-methyl-D-erythritol + diphosphate. It functions in the pathway isoprenoid biosynthesis; isopentenyl diphosphate biosynthesis via DXP pathway; isopentenyl diphosphate from 1-deoxy-D-xylulose 5-phosphate: step 2/6. Functionally, catalyzes the formation of 4-diphosphocytidyl-2-C-methyl-D-erythritol from CTP and 2-C-methyl-D-erythritol 4-phosphate (MEP). In Pseudomonas putida (strain ATCC 47054 / DSM 6125 / CFBP 8728 / NCIMB 11950 / KT2440), this protein is 2-C-methyl-D-erythritol 4-phosphate cytidylyltransferase.